A 123-amino-acid chain; its full sequence is Venom peptide MmKTx1 (123 aa).

A signal peptide spans Met1 to Gly21.

It belongs to the scorpion La1-like peptide family. In terms of processing, contains 4 disulfide bonds. In terms of tissue distribution, expressed by the venom gland.

It is found in the secreted. This Olivierus martensii (Manchurian scorpion) protein is Venom peptide MmKTx1.